A 172-amino-acid chain; its full sequence is uncharacterized protein (172 aa).

The protein belongs to the archaeal NMN adenylyltransferase family.

This is an uncharacterized protein from Aeropyrum pernix (strain ATCC 700893 / DSM 11879 / JCM 9820 / NBRC 100138 / K1).